The primary structure comprises 294 residues: Bifunctional protein FolD (294 aa).

Residues 166–168 (GRS), serine 195, and isoleucine 236 each bind NADP(+).

The protein belongs to the tetrahydrofolate dehydrogenase/cyclohydrolase family. As to quaternary structure, homodimer.

It catalyses the reaction (6R)-5,10-methylene-5,6,7,8-tetrahydrofolate + NADP(+) = (6R)-5,10-methenyltetrahydrofolate + NADPH. The catalysed reaction is (6R)-5,10-methenyltetrahydrofolate + H2O = (6R)-10-formyltetrahydrofolate + H(+). Its pathway is one-carbon metabolism; tetrahydrofolate interconversion. In terms of biological role, catalyzes the oxidation of 5,10-methylenetetrahydrofolate to 5,10-methenyltetrahydrofolate and then the hydrolysis of 5,10-methenyltetrahydrofolate to 10-formyltetrahydrofolate. This chain is Bifunctional protein FolD, found in Chloroherpeton thalassium (strain ATCC 35110 / GB-78).